We begin with the raw amino-acid sequence, 262 residues long: tRNA pseudouridine synthase A (262 aa).

Asp51 functions as the Nucleophile in the catalytic mechanism. Tyr109 contacts substrate.

It belongs to the tRNA pseudouridine synthase TruA family. As to quaternary structure, homodimer.

It catalyses the reaction uridine(38/39/40) in tRNA = pseudouridine(38/39/40) in tRNA. Formation of pseudouridine at positions 38, 39 and 40 in the anticodon stem and loop of transfer RNAs. The sequence is that of tRNA pseudouridine synthase A from Legionella pneumophila (strain Paris).